Reading from the N-terminus, the 224-residue chain is Octanoyltransferase (224 aa).

The region spanning Pro29–Pro224 is the BPL/LPL catalytic domain. Substrate-binding positions include Arg68–His75, Ala157–Gly159, and Gly170–Ala172. The active-site Acyl-thioester intermediate is the Cys188.

The protein belongs to the LipB family.

Its subcellular location is the cytoplasm. The enzyme catalyses octanoyl-[ACP] + L-lysyl-[protein] = N(6)-octanoyl-L-lysyl-[protein] + holo-[ACP] + H(+). It participates in protein modification; protein lipoylation via endogenous pathway; protein N(6)-(lipoyl)lysine from octanoyl-[acyl-carrier-protein]: step 1/2. In terms of biological role, catalyzes the transfer of endogenously produced octanoic acid from octanoyl-acyl-carrier-protein onto the lipoyl domains of lipoate-dependent enzymes. Lipoyl-ACP can also act as a substrate although octanoyl-ACP is likely to be the physiological substrate. This Methylibium petroleiphilum (strain ATCC BAA-1232 / LMG 22953 / PM1) protein is Octanoyltransferase.